The primary structure comprises 176 residues: Photosystem I assembly protein Ycf4 (176 aa).

A run of 2 helical transmembrane segments spans residues Phe-22–Ser-42 and Leu-48–Ile-68.

This sequence belongs to the Ycf4 family.

It localises to the plastid thylakoid membrane. Functionally, seems to be required for the assembly of the photosystem I complex. The sequence is that of Photosystem I assembly protein Ycf4 from Cuscuta gronovii (Common dodder).